Consider the following 485-residue polypeptide: Glutamyl-tRNA(Gln) amidotransferase subunit A (485 aa).

Residues lysine 75 and serine 150 each act as charge relay system in the active site. The active-site Acyl-ester intermediate is the serine 174.

This sequence belongs to the amidase family. GatA subfamily. In terms of assembly, heterotrimer of A, B and C subunits.

It carries out the reaction L-glutamyl-tRNA(Gln) + L-glutamine + ATP + H2O = L-glutaminyl-tRNA(Gln) + L-glutamate + ADP + phosphate + H(+). Its function is as follows. Allows the formation of correctly charged Gln-tRNA(Gln) through the transamidation of misacylated Glu-tRNA(Gln) in organisms which lack glutaminyl-tRNA synthetase. The reaction takes place in the presence of glutamine and ATP through an activated gamma-phospho-Glu-tRNA(Gln). The polypeptide is Glutamyl-tRNA(Gln) amidotransferase subunit A (Trichodesmium erythraeum (strain IMS101)).